A 430-amino-acid chain; its full sequence is Adenylosuccinate synthetase (430 aa).

GTP is bound by residues 13-19 (GDEGKGK) and 41-43 (GHT). D14 serves as the catalytic Proton acceptor. The Mg(2+) site is built by D14 and G41. IMP is bound by residues 14–17 (DEGK), 39–42 (NAGH), T130, R144, Q225, T240, and R304. H42 (proton donor) is an active-site residue. 300–306 (ASTGRPR) serves as a coordination point for substrate. Residues R306, 332–334 (KLD), and 414–416 (STG) each bind GTP.

It belongs to the adenylosuccinate synthetase family. As to quaternary structure, homodimer. Mg(2+) is required as a cofactor.

It is found in the cytoplasm. The catalysed reaction is IMP + L-aspartate + GTP = N(6)-(1,2-dicarboxyethyl)-AMP + GDP + phosphate + 2 H(+). It functions in the pathway purine metabolism; AMP biosynthesis via de novo pathway; AMP from IMP: step 1/2. Functionally, plays an important role in the de novo pathway of purine nucleotide biosynthesis. Catalyzes the first committed step in the biosynthesis of AMP from IMP. The chain is Adenylosuccinate synthetase from Stenotrophomonas maltophilia (strain R551-3).